We begin with the raw amino-acid sequence, 655 residues long: Very long-chain specific acyl-CoA dehydrogenase, mitochondrial (655 aa).

The transit peptide at Met-1–Tyr-40 directs the protein to the mitochondrion. Residues Ser-22–Ala-66 form a disordered region. Residues Ala-41–Lys-482 form a catalytic region. A compositionally biased stretch (polar residues) spans Val-49–Ala-59. Position 71 is an N6-acetyllysine; alternate (Lys-71). Lys-71 is subject to N6-succinyllysine; alternate. N6-succinyllysine is present on Lys-195. Phe-214 to Ser-223 contributes to the FAD binding site. Cys-237 is subject to S-nitrosocysteine. At Lys-239 the chain carries N6-acetyllysine; alternate. Position 239 is an N6-succinyllysine; alternate (Lys-239). Trp-249–Ser-251 lines the FAD pocket. An N6-acetyllysine; alternate mark is found at Lys-276 and Lys-278. N6-succinyllysine; alternate is present on residues Lys-276 and Lys-278. Lys-298 is modified (N6-acetyllysine). Lys-331 carries the N6-acetyllysine; alternate modification. Lys-331 carries the post-translational modification N6-succinyllysine; alternate. N6-succinyllysine is present on Lys-372. A substrate-binding site is contributed by Phe-461 to Gly-463. The active-site Proton acceptor is Glu-462. An FAD-binding site is contributed by Thr-464–Asp-466. Position 482 is an N6-acetyllysine; alternate (Lys-482). Lys-482 is subject to N6-succinyllysine; alternate. The segment at Glu-483–Gly-516 is membrane-anchoring. Residues Ser-517 and Ser-522 each carry the phosphoserine modification. The residue at position 550 (Lys-550) is an N6-acetyllysine. Lys-556 carries the post-translational modification N6-acetyllysine; alternate. At Lys-556 the chain carries N6-succinyllysine; alternate. Residue Gln-562 coordinates FAD. N6-succinyllysine is present on Lys-639.

The protein belongs to the acyl-CoA dehydrogenase family. As to quaternary structure, homodimer. Homodimerizes after import into the mitochondrion. FAD is required as a cofactor. In terms of processing, S-nitrosylation at Cys-237 in liver improves catalytic efficiency.

The protein localises to the mitochondrion inner membrane. It catalyses the reaction a very-long-chain 2,3-saturated fatty acyl-CoA + oxidized [electron-transfer flavoprotein] + H(+) = a very-long-chain (2E)-enoyl-CoA + reduced [electron-transfer flavoprotein]. It carries out the reaction dodecanoyl-CoA + oxidized [electron-transfer flavoprotein] + H(+) = (2E)-dodecenoyl-CoA + reduced [electron-transfer flavoprotein]. The catalysed reaction is tetradecanoyl-CoA + oxidized [electron-transfer flavoprotein] + H(+) = (2E)-tetradecenoyl-CoA + reduced [electron-transfer flavoprotein]. The enzyme catalyses oxidized [electron-transfer flavoprotein] + hexadecanoyl-CoA + H(+) = (2E)-hexadecenoyl-CoA + reduced [electron-transfer flavoprotein]. It catalyses the reaction octadecanoyl-CoA + oxidized [electron-transfer flavoprotein] + H(+) = (2E)-octadecenoyl-CoA + reduced [electron-transfer flavoprotein]. It carries out the reaction eicosanoyl-CoA + oxidized [electron-transfer flavoprotein] + H(+) = (2E)-eicosenoyl-CoA + reduced [electron-transfer flavoprotein]. The catalysed reaction is docosanoyl-CoA + oxidized [electron-transfer flavoprotein] + H(+) = (2E)-docosenoyl-CoA + reduced [electron-transfer flavoprotein]. The enzyme catalyses tetracosanoyl-CoA + oxidized [electron-transfer flavoprotein] + H(+) = (2E)-tetracosenoyl-CoA + reduced [electron-transfer flavoprotein]. It functions in the pathway lipid metabolism; mitochondrial fatty acid beta-oxidation. In terms of biological role, very long-chain specific acyl-CoA dehydrogenase is one of the acyl-CoA dehydrogenases that catalyze the first step of mitochondrial fatty acid beta-oxidation, an aerobic process breaking down fatty acids into acetyl-CoA and allowing the production of energy from fats. The first step of fatty acid beta-oxidation consists in the removal of one hydrogen from C-2 and C-3 of the straight-chain fatty acyl-CoA thioester, resulting in the formation of trans-2-enoyl-CoA. Among the different mitochondrial acyl-CoA dehydrogenases, very long-chain specific acyl-CoA dehydrogenase acts specifically on acyl-CoAs with saturated 12 to 24 carbons long primary chains. The polypeptide is Very long-chain specific acyl-CoA dehydrogenase, mitochondrial (Bos taurus (Bovine)).